A 341-amino-acid polypeptide reads, in one-letter code: Mitochondrial ubiquitin ligase activator of nfkb 1-A (341 aa).

The Cytoplasmic portion of the chain corresponds to 1–5 (MEDFP). The chain crosses the membrane as a helical span at residues 6-26 (VLEMVCLGSSVALSGLFYYIY). The Mitochondrial intermembrane portion of the chain corresponds to 27-233 (RKKRKTVDKL…LLMEQEGQAE (207 aa)). A helical transmembrane segment spans residues 234-254 (VWRVFACICALAGVAVLIWTG). The Cytoplasmic segment spans residues 255–341 (RRYYRQLKLR…IKRVVPLYQA (87 aa)). The segment at 292-329 (CVICLSNPRGCVLLDCGHVCCCFRCYQALPQPFCPICR) adopts an RING-type zinc-finger fold.

Homooligomer.

It localises to the mitochondrion outer membrane. It catalyses the reaction S-ubiquitinyl-[E2 ubiquitin-conjugating enzyme]-L-cysteine + [acceptor protein]-L-lysine = [E2 ubiquitin-conjugating enzyme]-L-cysteine + N(6)-ubiquitinyl-[acceptor protein]-L-lysine.. It functions in the pathway protein modification; protein ubiquitination. In terms of biological role, E3 ubiquitin-protein ligase that plays a role in the control of mitochondrial morphology. Promotes mitochondrial fragmentation and influences mitochondrial localization. Inhibits cell growth. E3 ubiquitin ligases accept ubiquitin from an E2 ubiquitin-conjugating enzyme in the form of a thioester and then directly transfer the ubiquitin to targeted substrates. This is Mitochondrial ubiquitin ligase activator of nfkb 1-A (mul1a) from Danio rerio (Zebrafish).